The sequence spans 87 residues: Toxin CsEv3 (87 aa).

Positions 1 to 19 are cleaved as a signal peptide; that stretch reads MNSLLMITACLFLIGTVWA. Positions 20–85 constitute an LCN-type CS-alpha/beta domain; it reads KEGYLVNKST…TYPLPNKSCG (66 aa). 4 disulfides stabilise this stretch: Cys31/Cys84, Cys35/Cys60, Cys44/Cys65, and Cys48/Cys67. Cysteine amide is present on Cys84.

It belongs to the long (4 C-C) scorpion toxin superfamily. Sodium channel inhibitor family. Beta subfamily. Expressed by the venom gland.

It localises to the secreted. In terms of biological role, beta toxins bind voltage-independently at site-4 of sodium channels (Nav) and shift the voltage of activation toward more negative potentials thereby affecting sodium channel activation and promoting spontaneous and repetitive firing. Induces immediate paralysis in crickets after injection, with a total paralysis occurring within 15-30 minutes and lasting for 1-2 hours. Is also lethal to vertebrate (chicks) when injected in very high dosages (more that 100 mg/kg). This Centruroides sculpturatus (Arizona bark scorpion) protein is Toxin CsEv3.